Consider the following 118-residue polypeptide: MARIAGINIPEHKHTVIALTAIFGVGSTRAQSICEAAGVAETTKIKDLDEAQIDKLRDEVAKFTVEGDLRREVSMSIKRLMDLGCFRGIRHRRSLPLRGQRTKTNARTRKGPRKAIKK.

The interval 94–118 (SLPLRGQRTKTNARTRKGPRKAIKK) is disordered.

This sequence belongs to the universal ribosomal protein uS13 family. In terms of assembly, part of the 30S ribosomal subunit. Forms a loose heterodimer with protein S19. Forms two bridges to the 50S subunit in the 70S ribosome.

Located at the top of the head of the 30S subunit, it contacts several helices of the 16S rRNA. In the 70S ribosome it contacts the 23S rRNA (bridge B1a) and protein L5 of the 50S subunit (bridge B1b), connecting the 2 subunits; these bridges are implicated in subunit movement. Contacts the tRNAs in the A and P-sites. This is Small ribosomal subunit protein uS13 from Pseudoalteromonas atlantica (strain T6c / ATCC BAA-1087).